A 338-amino-acid polypeptide reads, in one-letter code: Ketol-acid reductoisomerase (NADP(+)) (338 aa).

The 181-residue stretch at 1 to 181 (MKIYYDKDCN…GGGRAGIIET (181 aa)) folds into the KARI N-terminal Rossmann domain. NADP(+)-binding positions include 24–27 (YGSQ), K47, S50, S52, and 82–85 (DEIQ). H107 is a catalytic residue. G133 provides a ligand contact to NADP(+). The KARI C-terminal knotted domain maps to 182–327 (SFKEETETDL…ARLRSMMSWI (146 aa)). Mg(2+) contacts are provided by D190, E194, E226, and E230. S251 is a binding site for substrate.

This sequence belongs to the ketol-acid reductoisomerase family. It depends on Mg(2+) as a cofactor.

The enzyme catalyses (2R)-2,3-dihydroxy-3-methylbutanoate + NADP(+) = (2S)-2-acetolactate + NADPH + H(+). It carries out the reaction (2R,3R)-2,3-dihydroxy-3-methylpentanoate + NADP(+) = (S)-2-ethyl-2-hydroxy-3-oxobutanoate + NADPH + H(+). It participates in amino-acid biosynthesis; L-isoleucine biosynthesis; L-isoleucine from 2-oxobutanoate: step 2/4. The protein operates within amino-acid biosynthesis; L-valine biosynthesis; L-valine from pyruvate: step 2/4. Its function is as follows. Involved in the biosynthesis of branched-chain amino acids (BCAA). Catalyzes an alkyl-migration followed by a ketol-acid reduction of (S)-2-acetolactate (S2AL) to yield (R)-2,3-dihydroxy-isovalerate. In the isomerase reaction, S2AL is rearranged via a Mg-dependent methyl migration to produce 3-hydroxy-3-methyl-2-ketobutyrate (HMKB). In the reductase reaction, this 2-ketoacid undergoes a metal-dependent reduction by NADPH to yield (R)-2,3-dihydroxy-isovalerate. The polypeptide is Ketol-acid reductoisomerase (NADP(+)) (Geobacter sulfurreducens (strain ATCC 51573 / DSM 12127 / PCA)).